A 1297-amino-acid chain; its full sequence is Insulin receptor-related protein (1297 aa).

The first 26 residues, 1-26 (MAVPSLWPWGACLPVIFLSLGFGLDT), serve as a signal peptide directing secretion. N-linked (GlcNAc...) asparagine glycosylation occurs at asparagine 47. 9 disulfide bridges follow: cysteine 214–cysteine 222, cysteine 216–cysteine 228, cysteine 229–cysteine 237, cysteine 233–cysteine 246, cysteine 249–cysteine 258, cysteine 262–cysteine 274, cysteine 280–cysteine 300, cysteine 304–cysteine 317, and cysteine 320–cysteine 324. Residue asparagine 311 is glycosylated (N-linked (GlcNAc...) asparagine). N-linked (GlcNAc...) asparagine glycans are attached at residues asparagine 411, asparagine 492, asparagine 528, asparagine 616, and asparagine 634. Fibronectin type-III domains lie at 483 to 603 (QTRT…TLPA) and 607 to 707 (VPQD…AQEA). A disulfide bridge links cysteine 657 with cysteine 864. 2 disordered regions span residues 666–687 (SNND…ESDC) and 732–758 (SINK…GNSS). The segment covering 675–685 (EDGDPEAEMES) has biased composition (acidic residues). Residues 747 to 921 (AAGPLRLGGN…PEEEDAGGLH (175 aa)) are Extracellular-facing. Asparagine 756, asparagine 885, and asparagine 898 each carry an N-linked (GlcNAc...) asparagine glycan. Positions 818 to 913 (IPGKVAWEAS…SVAFYILGPE (96 aa)) constitute a Fibronectin type-III 3 domain. A helical membrane pass occupies residues 922 to 943 (VLLTATPVGLTLLIVLAALGFF). Residues 944–1297 (YGKKRNRTLY…CSPQNGGPGH (354 aa)) are Cytoplasmic-facing. The 276-residue stretch at 979–1254 (ISIIRELGQG…SIQEELRPSF (276 aa)) folds into the Protein kinase domain. ATP-binding positions include 985 to 993 (LGQGSFGMV) and lysine 1013. The active-site Proton acceptor is the aspartate 1115. A phosphotyrosine; by autocatalysis mark is found at tyrosine 1145 and tyrosine 1146. Residues 1267–1297 (GARGSLPTTDAEPDSSPTPRDCSPQNGGPGH) form a disordered region. The span at 1281 to 1297 (SSPTPRDCSPQNGGPGH) shows a compositional bias: polar residues.

Belongs to the protein kinase superfamily. Tyr protein kinase family. Insulin receptor subfamily. As to quaternary structure, probable tetramer of 2 alpha and 2 beta chains linked by disulfide bonds. The alpha chains contribute to the formation of the ligand-binding domain, while the beta chains carry the kinase domain. In terms of processing, autophosphorylated on tyrosine residues between pH 7.9 and pH 10.5.

Its subcellular location is the membrane. The enzyme catalyses L-tyrosyl-[protein] + ATP = O-phospho-L-tyrosyl-[protein] + ADP + H(+). In terms of biological role, receptor with tyrosine-protein kinase activity. Functions as a pH sensing receptor which is activated by increased extracellular pH. Activates an intracellular signaling pathway that involves IRS1 and AKT1/PKB. The polypeptide is Insulin receptor-related protein (INSRR) (Homo sapiens (Human)).